A 514-amino-acid polypeptide reads, in one-letter code: Cytochrome P450 monooxygenase verB (514 aa).

A helical transmembrane segment spans residues 5 to 25 (WLSASVLITAVILLVDYLNYY). Residue Cys-457 coordinates heme.

The protein belongs to the cytochrome P450 family. It depends on heme as a cofactor.

Its subcellular location is the membrane. Its pathway is mycotoxin biosynthesis. Its function is as follows. Cytochrome P450 monooxygenase; part of the gene cluster that mediates the biosynthesis of 11'-deoxyverticillin A, one of the dimeric epipolythiodioxopiperazines (ETPs) from the verticillin family that act as mycotoxins. 11'-deoxyverticillin A is required for normal conidiation. The nonribosomal peptide synthetase verP is speculated to be responsible for condensation of amino acids to form the carbon skeleton of verticillin, whereas the cluster-specific tailoring enzymes are involved in further modifications leading to the production of 11'-deoxyverticillin A. This chain is Cytochrome P450 monooxygenase verB, found in Clonostachys rogersoniana.